A 309-amino-acid chain; its full sequence is Porphobilinogen deaminase (309 aa).

Cys241 carries the post-translational modification S-(dipyrrolylmethanemethyl)cysteine.

It belongs to the HMBS family. Monomer. The cofactor is dipyrromethane.

It carries out the reaction 4 porphobilinogen + H2O = hydroxymethylbilane + 4 NH4(+). It participates in porphyrin-containing compound metabolism; protoporphyrin-IX biosynthesis; coproporphyrinogen-III from 5-aminolevulinate: step 2/4. Functionally, tetrapolymerization of the monopyrrole PBG into the hydroxymethylbilane pre-uroporphyrinogen in several discrete steps. The sequence is that of Porphobilinogen deaminase from Bacillus cereus (strain AH820).